The chain runs to 287 residues: Small ribosomal subunit biogenesis GTPase RsgA (287 aa).

Positions 61-218 (SSELIRPTVA…LVDTPGFTTL (158 aa)) constitute a CP-type G domain. GTP is bound by residues 110-113 (NKED) and 161-169 (GPSGAGKST). 4 residues coordinate Zn(2+): C242, C247, H249, and C255.

This sequence belongs to the TRAFAC class YlqF/YawG GTPase family. RsgA subfamily. In terms of assembly, monomer. Associates with 30S ribosomal subunit, binds 16S rRNA. The cofactor is Zn(2+).

It is found in the cytoplasm. One of several proteins that assist in the late maturation steps of the functional core of the 30S ribosomal subunit. Helps release RbfA from mature subunits. May play a role in the assembly of ribosomal proteins into the subunit. Circularly permuted GTPase that catalyzes slow GTP hydrolysis, GTPase activity is stimulated by the 30S ribosomal subunit. This Clostridium perfringens (strain ATCC 13124 / DSM 756 / JCM 1290 / NCIMB 6125 / NCTC 8237 / Type A) protein is Small ribosomal subunit biogenesis GTPase RsgA.